Reading from the N-terminus, the 371-residue chain is D-alanine--D-alanine ligase (371 aa).

The ATP-grasp domain occupies 154–361 (KKLLVAEGLP…YPTLLAAMVD (208 aa)). 182 to 237 (RERLGLPVFVKPARGGSSIGVSRVSDWAELPAAIEAARRHDPKVIVEAGIAGRELE) is an ATP binding site. Mg(2+)-binding residues include Asp316, Glu328, and Asn330.

Belongs to the D-alanine--D-alanine ligase family. Mg(2+) serves as cofactor. The cofactor is Mn(2+).

It localises to the cytoplasm. It carries out the reaction 2 D-alanine + ATP = D-alanyl-D-alanine + ADP + phosphate + H(+). It functions in the pathway cell wall biogenesis; peptidoglycan biosynthesis. In terms of biological role, cell wall formation. The chain is D-alanine--D-alanine ligase from Mycobacterium sp. (strain KMS).